We begin with the raw amino-acid sequence, 98 residues long: Putative pterin-4-alpha-carbinolamine dehydratase (98 aa).

It belongs to the pterin-4-alpha-carbinolamine dehydratase family.

It carries out the reaction (4aS,6R)-4a-hydroxy-L-erythro-5,6,7,8-tetrahydrobiopterin = (6R)-L-erythro-6,7-dihydrobiopterin + H2O. This is Putative pterin-4-alpha-carbinolamine dehydratase from Chelativorans sp. (strain BNC1).